Consider the following 256-residue polypeptide: Deoxyribose-phosphate aldolase (256 aa).

The active-site Proton donor/acceptor is the aspartate 102. The active-site Schiff-base intermediate with acetaldehyde is lysine 165. Lysine 197 functions as the Proton donor/acceptor in the catalytic mechanism.

It belongs to the DeoC/FbaB aldolase family. DeoC type 2 subfamily.

The protein localises to the cytoplasm. The catalysed reaction is 2-deoxy-D-ribose 5-phosphate = D-glyceraldehyde 3-phosphate + acetaldehyde. Its pathway is carbohydrate degradation; 2-deoxy-D-ribose 1-phosphate degradation; D-glyceraldehyde 3-phosphate and acetaldehyde from 2-deoxy-alpha-D-ribose 1-phosphate: step 2/2. Its function is as follows. Catalyzes a reversible aldol reaction between acetaldehyde and D-glyceraldehyde 3-phosphate to generate 2-deoxy-D-ribose 5-phosphate. This is Deoxyribose-phosphate aldolase from Shewanella sp. (strain ANA-3).